The primary structure comprises 324 residues: Phospho-N-acetylmuramoyl-pentapeptide-transferase (324 aa).

A run of 10 helical transmembrane segments spans residues 5–25, 50–70, 77–97, 117–137, 147–167, 176–196, 203–223, 227–247, 250–270, and 302–322; these read VILFTIIMGFLISVLISPILI, GTPTMGGVMIIVSIAITAIVM, LSAEMFLLLFVTIGYGLLGFL, LIGQIIIAIVFYGVYHYCHFS, LSIDLGWGYFILVLFMLVGGS, LDGLLSGTAAIAFGAFAILAW, VAIFSVAVVGAVLGFLVFNAH, VFMGDTGSLALGGAIVTVAIL, LEILLVIIGGVFVIETLSVIL, and VVVTFWTAGLLLAVLGIYIEV.

It belongs to the glycosyltransferase 4 family. MraY subfamily. Requires Mg(2+) as cofactor.

The protein localises to the cell membrane. The catalysed reaction is UDP-N-acetyl-alpha-D-muramoyl-L-alanyl-gamma-D-glutamyl-meso-2,6-diaminopimeloyl-D-alanyl-D-alanine + di-trans,octa-cis-undecaprenyl phosphate = di-trans,octa-cis-undecaprenyl diphospho-N-acetyl-alpha-D-muramoyl-L-alanyl-D-glutamyl-meso-2,6-diaminopimeloyl-D-alanyl-D-alanine + UMP. It participates in cell wall biogenesis; peptidoglycan biosynthesis. Functionally, catalyzes the initial step of the lipid cycle reactions in the biosynthesis of the cell wall peptidoglycan: transfers peptidoglycan precursor phospho-MurNAc-pentapeptide from UDP-MurNAc-pentapeptide onto the lipid carrier undecaprenyl phosphate, yielding undecaprenyl-pyrophosphoryl-MurNAc-pentapeptide, known as lipid I. The polypeptide is Phospho-N-acetylmuramoyl-pentapeptide-transferase (Bacillus velezensis (strain DSM 23117 / BGSC 10A6 / LMG 26770 / FZB42) (Bacillus amyloliquefaciens subsp. plantarum)).